We begin with the raw amino-acid sequence, 200 residues long: Phosphatidylethanolamine N-methyltransferase B (200 aa).

Topologically, residues Met-1–Asp-8 are lumenal. Residues Leu-9–Phe-29 constitute an intramembrane region (helical). At Glu-30 to Leu-39 the chain is on the lumenal side. A helical transmembrane segment spans residues Ile-40–Ile-58. Residues Arg-59–Gly-86 lie on the Cytoplasmic side of the membrane. The helical transmembrane segment at Asp-87 to Lys-107 threads the bilayer. An S-adenosyl-L-methionine-binding site is contributed by Ile-91 to Gly-93. At Gly-108 to Asn-150 the chain is on the lumenal side. The helical transmembrane segment at Gln-151–Thr-171 threads the bilayer. Residues Phe-172–Asn-200 are Cytoplasmic-facing. Residue Glu-174–Thr-175 participates in S-adenosyl-L-methionine binding.

It belongs to the class VI-like SAM-binding methyltransferase superfamily. PEMT/PEM2 methyltransferase family.

Its subcellular location is the endoplasmic reticulum membrane. The protein localises to the mitochondrion membrane. It catalyses the reaction a 1,2-diacyl-sn-glycero-3-phospho-N-methylethanolamine + S-adenosyl-L-methionine = a 1,2-diacyl-sn-glycero-3-phospho-N,N-dimethylethanolamine + S-adenosyl-L-homocysteine + H(+). It carries out the reaction a 1,2-diacyl-sn-glycero-3-phospho-N,N-dimethylethanolamine + S-adenosyl-L-methionine = a 1,2-diacyl-sn-glycero-3-phosphocholine + S-adenosyl-L-homocysteine + H(+). The catalysed reaction is a 1,2-diacyl-sn-glycero-3-phosphoethanolamine + S-adenosyl-L-methionine = a 1,2-diacyl-sn-glycero-3-phospho-N-methylethanolamine + S-adenosyl-L-homocysteine + H(+). It functions in the pathway phospholipid metabolism; phosphatidylcholine biosynthesis. In terms of biological role, catalyzes the three sequential steps of the methylation pathway of phosphatidylcholine biosynthesis, the SAM-dependent methylation of phosphatidylethanolamine (PE) to phosphatidylmonomethylethanolamine (PMME), PMME to phosphatidyldimethylethanolamine (PDME), and PDME to phosphatidylcholine (PC). The protein is Phosphatidylethanolamine N-methyltransferase B (pemtB) of Dictyostelium discoideum (Social amoeba).